The following is a 244-amino-acid chain: Nodulation protein G (244 aa).

An NAD(+)-binding site is contributed by 11–35; the sequence is VTGASGAIGGAIARVLHAQGAIVGL. Ser139 lines the substrate pocket. The Proton acceptor role is filled by Tyr152.

Belongs to the short-chain dehydrogenases/reductases (SDR) family.

Proposed to modify Nod factor fatty acyl chain. This is Nodulation protein G (nodG) from Rhizobium meliloti (Ensifer meliloti).